We begin with the raw amino-acid sequence, 448 residues long: Methionine aminopeptidase 2-1 (448 aa).

The tract at residues 1–83 (MAAQVIPELQ…TQKAQTEPPR (83 aa)) is disordered. A compositionally biased stretch (acidic residues) spans 32–48 (ENEDGDSEDDNGDDQGA). Residues 59 to 73 (AKKKKKKKPKKKKKD) show a composition bias toward basic residues. His198 is a binding site for substrate. 3 residues coordinate a divalent metal cation: Asp218, Asp229, and His298. His306 provides a ligand contact to substrate. A divalent metal cation is bound by residues Glu334 and Glu429.

This sequence belongs to the peptidase M24A family. Methionine aminopeptidase eukaryotic type 2 subfamily. Requires Co(2+) as cofactor. Zn(2+) serves as cofactor. The cofactor is Mn(2+). It depends on Fe(2+) as a cofactor.

The protein localises to the cytoplasm. It catalyses the reaction Release of N-terminal amino acids, preferentially methionine, from peptides and arylamides.. Functionally, cotranslationally removes the N-terminal methionine from nascent proteins. The N-terminal methionine is often cleaved when the second residue in the primary sequence is small and uncharged (Met-Ala-, Cys, Gly, Pro, Ser, Thr, or Val). This is Methionine aminopeptidase 2-1 from Ajellomyces capsulatus (strain G186AR / H82 / ATCC MYA-2454 / RMSCC 2432) (Darling's disease fungus).